A 218-amino-acid polypeptide reads, in one-letter code: MAQAKADTPEAGLKALMAALRKQGVTDPAVLTAIEKTPRDLFTPDLFKERSWEDSALPIACGQTISQPFIVGLMTQALTLEPRCRVLEIGTGSGYQTAVLSRVSRLVYTIERYRTLMKEAEARFAVLGLTNVITKFGDGWEGWPKQAPFDRILVTAAAQDEPEALLSQLKPQGVLVAPVGKGPVQSLRRYAGDGKGGFTVEVLCDVRFVPILDGVARE.

Residue Ser66 is part of the active site.

Belongs to the methyltransferase superfamily. L-isoaspartyl/D-aspartyl protein methyltransferase family.

It localises to the cytoplasm. It carries out the reaction [protein]-L-isoaspartate + S-adenosyl-L-methionine = [protein]-L-isoaspartate alpha-methyl ester + S-adenosyl-L-homocysteine. In terms of biological role, catalyzes the methyl esterification of L-isoaspartyl residues in peptides and proteins that result from spontaneous decomposition of normal L-aspartyl and L-asparaginyl residues. It plays a role in the repair and/or degradation of damaged proteins. The sequence is that of Protein-L-isoaspartate O-methyltransferase from Caulobacter sp. (strain K31).